A 250-amino-acid chain; its full sequence is Pyridoxine 5'-phosphate synthase (250 aa).

3-amino-2-oxopropyl phosphate-binding residues include Asn-8 and Arg-19. The active-site Proton acceptor is the His-44. Residues Arg-46 and His-51 each coordinate 1-deoxy-D-xylulose 5-phosphate. Residue Glu-76 is the Proton acceptor of the active site. Thr-106 lines the 1-deoxy-D-xylulose 5-phosphate pocket. Catalysis depends on His-200, which acts as the Proton donor. Residues Asp-201 and Gly-223–His-224 contribute to the 3-amino-2-oxopropyl phosphate site.

It belongs to the PNP synthase family. Homooctamer; tetramer of dimers.

It is found in the cytoplasm. The catalysed reaction is 3-amino-2-oxopropyl phosphate + 1-deoxy-D-xylulose 5-phosphate = pyridoxine 5'-phosphate + phosphate + 2 H2O + H(+). It participates in cofactor biosynthesis; pyridoxine 5'-phosphate biosynthesis; pyridoxine 5'-phosphate from D-erythrose 4-phosphate: step 5/5. Functionally, catalyzes the complicated ring closure reaction between the two acyclic compounds 1-deoxy-D-xylulose-5-phosphate (DXP) and 3-amino-2-oxopropyl phosphate (1-amino-acetone-3-phosphate or AAP) to form pyridoxine 5'-phosphate (PNP) and inorganic phosphate. This is Pyridoxine 5'-phosphate synthase from Allorhizobium ampelinum (strain ATCC BAA-846 / DSM 112012 / S4) (Agrobacterium vitis (strain S4)).